The chain runs to 147 residues: Probable inactive ribonuclease-like protein 12 (147 aa).

The signal sequence occupies residues 1-20; sequence MIIMVIIFLVLLFWENEVND.

The protein belongs to the pancreatic ribonuclease family.

It localises to the secreted. In terms of biological role, does not exhibit any ribonuclease activity. This Homo sapiens (Human) protein is Probable inactive ribonuclease-like protein 12 (RNASE12).